We begin with the raw amino-acid sequence, 322 residues long: MSGELPPNINIKEPRWDQSTFIGRAKHFFTVTDPRNILLTNEQLEAARKVVHDYRQGIIPSGLTENELWRAKYIYDSAFHPDTGEKMILIGRMSAQVPMNMTITGCMMTFYRTTPAVLFWQWINQSFNAVVNYTNRSGDAPLTVNELGTAYVSATTGAVATALGLNALTKHVSPLIGRFVPFAAVAAANCINIPLMRQRELKVGIPVTDENGNRLGESANAAKQAITQVVVSRILMAAPGMAIPPFIMNTLEKKAFLKRFPWMSAPVQVGIVGFCLVFATPLCCALFPQKSSMSVTSLEAELQARIRETYPELRRVYFNKGL.

S2 bears the N-acetylserine mark. Topologically, residues 2–102 (SGELPPNINI…MSAQVPMNMT (101 aa)) are mitochondrial matrix. The chain crosses the membrane as a helical span at residues 103-120 (ITGCMMTFYRTTPAVLFW). Residues 121–146 (QWINQSFNAVVNYTNRSGDAPLTVNE) are Mitochondrial intermembrane-facing. A helical transmembrane segment spans residues 147 to 167 (LGTAYVSATTGAVATALGLNA). Over 168–174 (LTKHVSP) the chain is Mitochondrial matrix. Residues 175–195 (LIGRFVPFAAVAAANCINIPL) traverse the membrane as a helical segment. Over 196-228 (MRQRELKVGIPVTDENGNRLGESANAAKQAITQ) the chain is Mitochondrial intermembrane. A helical membrane pass occupies residues 229 to 249 (VVVSRILMAAPGMAIPPFIMN). Residues 250-266 (TLEKKAFLKRFPWMSAP) are Mitochondrial matrix-facing. The chain crosses the membrane as a helical span at residues 267–287 (VQVGIVGFCLVFATPLCCALF). The Mitochondrial intermembrane portion of the chain corresponds to 288-322 (PQKSSMSVTSLEAELQARIRETYPELRRVYFNKGL).

It belongs to the sideroflexin family.

Its subcellular location is the mitochondrion inner membrane. It carries out the reaction L-serine(in) = L-serine(out). It catalyses the reaction L-alanine(in) = L-alanine(out). The enzyme catalyses L-cysteine(in) = L-cysteine(out). In terms of biological role, amino acid transporter importing serine, an essential substrate of the mitochondrial branch of the one-carbon pathway, into mitochondria. Mitochondrial serine is then converted to glycine and formate, which exits to the cytosol where it is used to generate the charged folates that serve as one-carbon donors. May also transport other amino acids including alanine and cysteine. This Bos taurus (Bovine) protein is Sideroflexin-1 (SFXN1).